We begin with the raw amino-acid sequence, 376 residues long: Alanine racemase (376 aa).

Catalysis depends on Lys-36, which acts as the Proton acceptor; specific for D-alanine. Lys-36 carries the post-translational modification N6-(pyridoxal phosphate)lysine. Residue Arg-134 participates in substrate binding. The Proton acceptor; specific for L-alanine role is filled by Tyr-266. Met-314 is a binding site for substrate.

The protein belongs to the alanine racemase family. Requires pyridoxal 5'-phosphate as cofactor.

The enzyme catalyses L-alanine = D-alanine. The protein operates within amino-acid biosynthesis; D-alanine biosynthesis; D-alanine from L-alanine: step 1/1. Its function is as follows. Catalyzes the interconversion of L-alanine and D-alanine. May also act on other amino acids. The chain is Alanine racemase (alr) from Nitratidesulfovibrio vulgaris (strain DP4) (Desulfovibrio vulgaris).